Consider the following 90-residue polypeptide: Small ribosomal subunit protein bS16 (90 aa).

This sequence belongs to the bacterial ribosomal protein bS16 family.

The chain is Small ribosomal subunit protein bS16 from Streptococcus pneumoniae (strain Hungary19A-6).